Consider the following 572-residue polypeptide: Probable catabolite repression protein creC (572 aa).

Residues 36-61 form a disordered region; that stretch reads HLATPPPHPSEAPVVNPNPLATVPTP. WD repeat units follow at residues 226–266, 306–347, 348–387, and 390–434; these read VSNS…ALFT, LANQ…DIFR, SYYGGLICVCWSPDGKYIVTGGQDDLVTIWSFPERKIVAR, and GHNS…LHRP. Disordered regions lie at residues 458–486 and 541–572; these read HRADSASNRMRSDSQRTADTYNDYDSAVR and NDSYNGNTSSPAISTSAAGSGSGIADSAMGSL. The WD 5 repeat unit spans residues 506–543; that stretch reads VGDDPICWLGFQEDSIMTSSLEGHIRTWDRPREGINDS. Residues 549–572 are compositionally biased toward low complexity; that stretch reads SSPAISTSAAGSGSGIADSAMGSL.

Belongs to the WD repeat creC family. In terms of assembly, interacts with creB.

Component of the regulatory network controlling carbon source utilization through ubiquitination and deubiquitination involving creA, creB, creC, creD and acrB. Required to prevent the proteolysis of the CreB deubiquitinating enzyme in the absence of carbon catabolite repression. CreB deubiquitinating enzyme stabilized in a complex with the CreC leads to the expression of genes such as those in the proline and quinate pathways. This chain is Probable catabolite repression protein creC (creC), found in Aspergillus flavus (strain ATCC 200026 / FGSC A1120 / IAM 13836 / NRRL 3357 / JCM 12722 / SRRC 167).